The sequence spans 144 residues: Prefoldin subunit alpha (144 aa).

This sequence belongs to the prefoldin subunit alpha family. Heterohexamer of two alpha and four beta subunits.

The protein localises to the cytoplasm. Molecular chaperone capable of stabilizing a range of proteins. Seems to fulfill an ATP-independent, HSP70-like function in archaeal de novo protein folding. The chain is Prefoldin subunit alpha from Methanosarcina barkeri (strain Fusaro / DSM 804).